The following is a 395-amino-acid chain: Phosphoglycerate kinase (395 aa).

Substrate is bound by residues 20 to 22 (DFN), Arg36, 59 to 62 (HLGR), Arg120, and Arg157. ATP-binding positions include Lys208, Gly296, Glu327, and 353 to 356 (GGDT).

This sequence belongs to the phosphoglycerate kinase family. In terms of assembly, monomer.

Its subcellular location is the cytoplasm. It catalyses the reaction (2R)-3-phosphoglycerate + ATP = (2R)-3-phospho-glyceroyl phosphate + ADP. It functions in the pathway carbohydrate degradation; glycolysis; pyruvate from D-glyceraldehyde 3-phosphate: step 2/5. The polypeptide is Phosphoglycerate kinase (Tropheryma whipplei (strain TW08/27) (Whipple's bacillus)).